Reading from the N-terminus, the 102-residue chain is Putative nuclear receptor corepressor 1-like protein NCOR1P1 (102 aa).

The segment covering 1 to 18 (MSSSGYPPNQGAFSTEQS) has biased composition (polar residues). The disordered stretch occupies residues 1–68 (MSSSGYPPNQ…DQNASPSKLS (68 aa)). Residues 68 to 100 (SKEELIECMDRVDREIAKVEQQILKLKKKQVKV) are a coiled coil.

The protein belongs to the N-CoR nuclear receptor corepressors family.

In Homo sapiens (Human), this protein is Putative nuclear receptor corepressor 1-like protein NCOR1P1 (NCOR1P1).